An 855-amino-acid polypeptide reads, in one-letter code: MTFYISSSLTPTHFSKPLNPSNTLFPSQFRGSLSSFVRRRKPTEAKLSSKFNLFPSRRNGLITCCSTSSFESTESSVSQEEDAESNRLFEKLRETERERLSNMEELERKANVQLERQLVMASDWSRTLLTMRGKLKGTEWDPETSHRINFSDFMKLLDSNSVQYMEYSNYGQTISVILPYYKDGEPLGEEEDSKKEIIFRRHIVDRMPIDGWNDVWKKLHQQIVNVEVFNVDVVPAEVYTTVATFVVWSMRLALFVSLYVWIDSITRPIYAKLIPCDLGTPTKKIRQPLKRQALGSLGKSRAKFISAEEKTGVTFDDFAGQEYIKRELQEIVRILKNDEEFQNKGIYCPKGVLLHGPPGTGKTLLAKAIAGEAGLPFFAANGTDFVEMFVGVAASRVKDLFASSRSYAPSIIFIDEIDAIGSKRGGPDIGGGGAEREQGLLQILTEMDGFKVTTSQVLVIGATNRLDILDPALLRKGRFDKIIRVGLPSKDGRLAILKVHARNKFFRSEDEKEELLQEVAENTEDFTGAELQNVLNEAGILTARKDLDYIGREELLEALKRQKGTFETGQEDSTEVPEELKLRLAYREAAVAVLACYLPDQYRPISETDINSIRSQPNMRYSETSGRVFARKSDYVNSIIRACAPRVVEEEMFGIENLCWISAKSTLEASQRAEFLILQTGMTAFGKAYYRNQRDLVPNLVPKLEALRDEYMRFAVEKCSSILQEYQSALEEITDVLLEKGEIKADEIWNIYNTAPRIPQKPVRPVDEYGALIYAGRWGIHGVSLPGRVTFSPGNIGFATFGAPRPMETQIISDDTWKLVDEIWDKKVEEIKAEAVIQIEEEKKKPQILMATHFF.

Residues 1 to 78 (MTFYISSSLT…SFESTESSVS (78 aa)) constitute a chloroplast transit peptide. The chain crosses the membrane as a helical span at residues 242-262 (VATFVVWSMRLALFVSLYVWI). 356–363 (GPPGTGKT) contacts ATP.

This sequence belongs to the AAA ATPase family. In terms of assembly, homooligomer. Interacts with FtsHi2. In terms of tissue distribution, ubiquitous but preferentially expressed in young leaves.

It is found in the plastid. Its subcellular location is the chloroplast thylakoid membrane. Its function is as follows. Functions in chloroplast biogenesis and chloroplast division. Required for plastid development during embryogenesis. Might be involved in chaperone functions or play a structural role in the thylakoid FtsH complex. This is Probable inactive ATP-dependent zinc metalloprotease FTSHI 4, chloroplastic from Arabidopsis thaliana (Mouse-ear cress).